The sequence spans 336 residues: MALKLGVIGTGAIGQDHIRRCSKTLVGSQVVAVTDINLEQAAKVVRDLDLGAEVYADGHALIAAPDVEAVLVCSWGPSHEEYVLAAIAAGKPVFCEKPLAVTAEGCRHIVEAEIASGRRLVQVGFMRPYDQGYRALKAAIDSGQIGEPLMLHCAHRNPSVGENYKTDMAITDTLIHELNVLRWLLDDDYVSVQVVFPRKTSKALAHLKDPQIVMLETVKGTRIDVEVFVNCQYGYDIQCEVVGETGIARLPEPSQVQLRSEAKLSNAILMDWKDRFIAAYDVELQDFIDGVKGGTLYGPSAWDGYAAAVAADACVLAQNTGAVVPITLAMRPVFYS.

The protein belongs to the Gfo/Idh/MocA family. Homotetramer.

It catalyses the reaction myo-inositol + NAD(+) = scyllo-inosose + NADH + H(+). Its function is as follows. Involved in the oxidation of myo-inositol (MI) to 2-keto-myo-inositol (2KMI or 2-inosose). This is Inositol 2-dehydrogenase from Pseudomonas syringae pv. syringae (strain B728a).